Consider the following 373-residue polypeptide: Putative F-box/kelch-repeat protein At5g24040 (373 aa).

In terms of domain architecture, F-box spans 2–50; it reads VKWSELPPEILHLISLKIDNPFDLIHFRSVCSFWRSSSLLKFRHMTSLR. 2 Kelch repeats span residues 165-207 and 262-308; these read NEYM…PFKG and YDFH…CTFS.

The sequence is that of Putative F-box/kelch-repeat protein At5g24040 from Arabidopsis thaliana (Mouse-ear cress).